The sequence spans 84 residues: Large ribosomal subunit protein bL27 (84 aa).

The tract at residues 1 to 21 is disordered; that stretch reads MAHKKGGGSTKNGRDSNPKYL.

The protein belongs to the bacterial ribosomal protein bL27 family.

The polypeptide is Large ribosomal subunit protein bL27 (Pelodictyon phaeoclathratiforme (strain DSM 5477 / BU-1)).